The following is a 99-amino-acid chain: Aspartyl/glutamyl-tRNA(Asn/Gln) amidotransferase subunit C (99 aa).

The protein belongs to the GatC family. In terms of assembly, heterotrimer of A, B and C subunits.

The enzyme catalyses L-glutamyl-tRNA(Gln) + L-glutamine + ATP + H2O = L-glutaminyl-tRNA(Gln) + L-glutamate + ADP + phosphate + H(+). It carries out the reaction L-aspartyl-tRNA(Asn) + L-glutamine + ATP + H2O = L-asparaginyl-tRNA(Asn) + L-glutamate + ADP + phosphate + 2 H(+). In terms of biological role, allows the formation of correctly charged Asn-tRNA(Asn) or Gln-tRNA(Gln) through the transamidation of misacylated Asp-tRNA(Asn) or Glu-tRNA(Gln) in organisms which lack either or both of asparaginyl-tRNA or glutaminyl-tRNA synthetases. The reaction takes place in the presence of glutamine and ATP through an activated phospho-Asp-tRNA(Asn) or phospho-Glu-tRNA(Gln). This Mycobacterium marinum (strain ATCC BAA-535 / M) protein is Aspartyl/glutamyl-tRNA(Asn/Gln) amidotransferase subunit C.